The primary structure comprises 600 residues: Transcription factor efl-3 (600 aa).

Residues 35-65 are disordered; it reads LPEPRVNRTTDPDHENLLPSPVPRPSPAMSQ. Positions 39–50 are enriched in basic and acidic residues; sequence RVNRTTDPDHEN. DNA-binding regions lie at residues 95–164 and 253–343; these read RKEK…QWQG and RDRQ…VYCG.

The protein belongs to the E2F/DP family.

Its subcellular location is the nucleus. Its function is as follows. Probable transcription factor which represses gene expression in a subset of ventral nerve cord neurons. Involved in regulating programmed cell death and determining cell fate during development, acting in a partially redundant manner with lin-39 to repress the BH3 domain-encoding gene egl-1 in the VA and VB motor neurons. This Caenorhabditis elegans protein is Transcription factor efl-3.